The sequence spans 341 residues: Sulfate/thiosulfate import ATP-binding protein CysA 2 (341 aa).

The ABC transporter domain maps to 3–235 (IRLENVVKTF…PNSSFVMRFL (233 aa)). Position 35–42 (35–42 (GPSGSGKT)) interacts with ATP.

The protein belongs to the ABC transporter superfamily. Sulfate/tungstate importer (TC 3.A.1.6) family. As to quaternary structure, the complex is composed of two ATP-binding proteins (CysA), two transmembrane proteins (CysT and CysW) and a solute-binding protein (CysP).

It is found in the cell inner membrane. It carries out the reaction sulfate(out) + ATP + H2O = sulfate(in) + ADP + phosphate + H(+). It catalyses the reaction thiosulfate(out) + ATP + H2O = thiosulfate(in) + ADP + phosphate + H(+). Its function is as follows. Part of the ABC transporter complex CysAWTP involved in sulfate/thiosulfate import. Responsible for energy coupling to the transport system. This chain is Sulfate/thiosulfate import ATP-binding protein CysA 2, found in Agrobacterium fabrum (strain C58 / ATCC 33970) (Agrobacterium tumefaciens (strain C58)).